The chain runs to 185 residues: Ribosome-recycling factor (185 aa).

Belongs to the RRF family.

Its subcellular location is the cytoplasm. Functionally, responsible for the release of ribosomes from messenger RNA at the termination of protein biosynthesis. May increase the efficiency of translation by recycling ribosomes from one round of translation to another. The polypeptide is Ribosome-recycling factor (Chromohalobacter salexigens (strain ATCC BAA-138 / DSM 3043 / CIP 106854 / NCIMB 13768 / 1H11)).